Here is an 858-residue protein sequence, read N- to C-terminus: Leucine--tRNA ligase (858 aa).

A 'HIGH' region motif is present at residues 42–52; sequence PYPSGRLHMGH. The 'KMSKS' region motif lies at 618–622; sequence KMSKS. ATP is bound at residue lysine 621.

Belongs to the class-I aminoacyl-tRNA synthetase family.

The protein localises to the cytoplasm. The catalysed reaction is tRNA(Leu) + L-leucine + ATP = L-leucyl-tRNA(Leu) + AMP + diphosphate. This Aeromonas salmonicida (strain A449) protein is Leucine--tRNA ligase.